Here is a 304-residue protein sequence, read N- to C-terminus: Ribokinase (304 aa).

Substrate contacts are provided by residues 12-14 (NVD), 41-45 (GKGAN), and E142. Residues N186 and 222–227 (TLGKQG) each bind ATP. 2 residues coordinate K(+): D248 and T250. Residues 253 to 254 (GD) and N279 each bind ATP. Residue D254 coordinates substrate. The active-site Proton acceptor is the D254. 4 residues coordinate K(+): T285, K288, G290, and S294.

This sequence belongs to the carbohydrate kinase PfkB family. Ribokinase subfamily. As to quaternary structure, homodimer. Requires Mg(2+) as cofactor.

The protein resides in the cytoplasm. It carries out the reaction D-ribose + ATP = D-ribose 5-phosphate + ADP + H(+). The protein operates within carbohydrate metabolism; D-ribose degradation; D-ribose 5-phosphate from beta-D-ribopyranose: step 2/2. With respect to regulation, activated by a monovalent cation that binds near, but not in, the active site. The most likely occupant of the site in vivo is potassium. Ion binding induces a conformational change that may alter substrate affinity. Functionally, catalyzes the phosphorylation of ribose at O-5 in a reaction requiring ATP and magnesium. The resulting D-ribose-5-phosphate can then be used either for sythesis of nucleotides, histidine, and tryptophan, or as a component of the pentose phosphate pathway. The protein is Ribokinase of Staphylococcus aureus (strain COL).